Here is a 290-residue protein sequence, read N- to C-terminus: Ribosomal RNA small subunit methyltransferase A (290 aa).

Residues asparagine 28, leucine 30, glycine 55, glutamate 76, aspartate 102, and asparagine 126 each contribute to the S-adenosyl-L-methionine site.

This sequence belongs to the class I-like SAM-binding methyltransferase superfamily. rRNA adenine N(6)-methyltransferase family. RsmA subfamily.

The protein localises to the cytoplasm. It catalyses the reaction adenosine(1518)/adenosine(1519) in 16S rRNA + 4 S-adenosyl-L-methionine = N(6)-dimethyladenosine(1518)/N(6)-dimethyladenosine(1519) in 16S rRNA + 4 S-adenosyl-L-homocysteine + 4 H(+). Functionally, specifically dimethylates two adjacent adenosines (A1518 and A1519) in the loop of a conserved hairpin near the 3'-end of 16S rRNA in the 30S particle. May play a critical role in biogenesis of 30S subunits. In Lachnoclostridium phytofermentans (strain ATCC 700394 / DSM 18823 / ISDg) (Clostridium phytofermentans), this protein is Ribosomal RNA small subunit methyltransferase A.